Here is a 443-residue protein sequence, read N- to C-terminus: Multidrug resistance protein MdtA (443 aa).

Positions 1–24 (MKAQSKRTSRLLILLGIAVAIIVA) are cleaved as a signal peptide. Residues 36–46 (DGSTGAQQHAV) show a composition bias toward polar residues. Disordered stretches follow at residues 36–57 (DGST…GGRR) and 398–443 (TPRS…AEKS). Basic and acidic residues predominate over residues 409-419 (AAEKPATAEKA). Residues 427-443 (SATGASAGSTTTAAEKS) are compositionally biased toward low complexity.

Belongs to the membrane fusion protein (MFP) (TC 8.A.1) family. As to quaternary structure, part of a tripartite efflux system composed of MdtA, MdtB and MdtC.

It is found in the cell inner membrane. The polypeptide is Multidrug resistance protein MdtA (Yersinia enterocolitica serotype O:8 / biotype 1B (strain NCTC 13174 / 8081)).